The sequence spans 286 residues: Phosphatidylserine decarboxylase proenzyme (286 aa).

Catalysis depends on charge relay system; for autoendoproteolytic cleavage activity residues aspartate 90, histidine 147, and serine 252. Serine 252 (schiff-base intermediate with substrate; via pyruvic acid; for decarboxylase activity) is an active-site residue. Serine 252 is modified (pyruvic acid (Ser); by autocatalysis).

Belongs to the phosphatidylserine decarboxylase family. PSD-B subfamily. Prokaryotic type I sub-subfamily. In terms of assembly, heterodimer of a large membrane-associated beta subunit and a small pyruvoyl-containing alpha subunit. The cofactor is pyruvate. Post-translationally, is synthesized initially as an inactive proenzyme. Formation of the active enzyme involves a self-maturation process in which the active site pyruvoyl group is generated from an internal serine residue via an autocatalytic post-translational modification. Two non-identical subunits are generated from the proenzyme in this reaction, and the pyruvate is formed at the N-terminus of the alpha chain, which is derived from the carboxyl end of the proenzyme. The autoendoproteolytic cleavage occurs by a canonical serine protease mechanism, in which the side chain hydroxyl group of the serine supplies its oxygen atom to form the C-terminus of the beta chain, while the remainder of the serine residue undergoes an oxidative deamination to produce ammonia and the pyruvoyl prosthetic group on the alpha chain. During this reaction, the Ser that is part of the protease active site of the proenzyme becomes the pyruvoyl prosthetic group, which constitutes an essential element of the active site of the mature decarboxylase.

The protein localises to the cell membrane. It carries out the reaction a 1,2-diacyl-sn-glycero-3-phospho-L-serine + H(+) = a 1,2-diacyl-sn-glycero-3-phosphoethanolamine + CO2. Its pathway is phospholipid metabolism; phosphatidylethanolamine biosynthesis; phosphatidylethanolamine from CDP-diacylglycerol: step 2/2. In terms of biological role, catalyzes the formation of phosphatidylethanolamine (PtdEtn) from phosphatidylserine (PtdSer). This is Phosphatidylserine decarboxylase proenzyme from Pseudomonas fluorescens (strain SBW25).